The primary structure comprises 185 residues: Peptidyl-tRNA hydrolase (185 aa).

Y14 is a binding site for tRNA. The Proton acceptor role is filled by H19. Residues Y65, N67, and N113 each coordinate tRNA.

This sequence belongs to the PTH family. As to quaternary structure, monomer.

It is found in the cytoplasm. It catalyses the reaction an N-acyl-L-alpha-aminoacyl-tRNA + H2O = an N-acyl-L-amino acid + a tRNA + H(+). Its function is as follows. Hydrolyzes ribosome-free peptidyl-tRNAs (with 1 or more amino acids incorporated), which drop off the ribosome during protein synthesis, or as a result of ribosome stalling. In terms of biological role, catalyzes the release of premature peptidyl moieties from peptidyl-tRNA molecules trapped in stalled 50S ribosomal subunits, and thus maintains levels of free tRNAs and 50S ribosomes. This is Peptidyl-tRNA hydrolase from Rickettsia prowazekii (strain Madrid E).